The chain runs to 264 residues: MNETPRVKLHGFNNLTKSLSFNMYDICYTKTAKEREAYIEYIDDVYNAERLTNILKRVADMIGAHVLNIAKQDYVPQGASVAMLVSEGPVVEVPEDDGPLPEAVVLSLDKSHITVHTYPEYHPNDGISTFRADIDVVTCGEISPLKALDYLIHSFDADIMIIDYRVRGFTRDIHGYKLFIDHDITSIQDYIPEHIREKYDMIDVNIYQENIFHTKCKLKQFDLDNYLFGYAKEDLSEQEANETTAKLRREMDEIFYGKNMPNTV.

Serine 111 acts as the Schiff-base intermediate with substrate; via pyruvic acid in catalysis. Serine 111 bears the Pyruvic acid (Ser); by autocatalysis mark. Catalysis depends on histidine 116, which acts as the Proton acceptor; for processing activity. Residue cysteine 139 is the Proton donor; for catalytic activity of the active site.

This sequence belongs to the prokaryotic AdoMetDC family. Type 2 subfamily. Heterooctamer of four alpha and four beta chains arranged as a tetramer of alpha/beta heterodimers. Pyruvate serves as cofactor. In terms of processing, is synthesized initially as an inactive proenzyme. Formation of the active enzyme involves a self-maturation process in which the active site pyruvoyl group is generated from an internal serine residue via an autocatalytic post-translational modification. Two non-identical subunits are generated from the proenzyme in this reaction, and the pyruvate is formed at the N-terminus of the alpha chain, which is derived from the carboxyl end of the proenzyme. The post-translation cleavage follows an unusual pathway, termed non-hydrolytic serinolysis, in which the side chain hydroxyl group of the serine supplies its oxygen atom to form the C-terminus of the beta chain, while the remainder of the serine residue undergoes an oxidative deamination to produce ammonia and the pyruvoyl group blocking the N-terminus of the alpha chain.

The enzyme catalyses S-adenosyl-L-methionine + H(+) = S-adenosyl 3-(methylsulfanyl)propylamine + CO2. It functions in the pathway amine and polyamine biosynthesis; S-adenosylmethioninamine biosynthesis; S-adenosylmethioninamine from S-adenosyl-L-methionine: step 1/1. In terms of biological role, catalyzes the decarboxylation of S-adenosylmethionine to S-adenosylmethioninamine (dcAdoMet), the propylamine donor required for the synthesis of the polyamines spermine and spermidine from the diamine putrescine. In Geobacillus kaustophilus (strain HTA426), this protein is S-adenosylmethionine decarboxylase proenzyme.